Here is a 494-residue protein sequence, read N- to C-terminus: MILGIILGLFIYIYLINIKFFNRAVPSSLLVGENKLKCKFPSGPLILPIIGSLYKLSLKYPHLSFKQLSDKYGKVFSLKMGSIDTIVINDINFLQKSFRDNPTFFSQRFHLPSFYYMGKYQGIIFGNGSHWRKLKDILSSSITKSKSRQMEELFYNEYFKAEEYLLKKINQDNNIDMGPIFKRILLNILYRFLFGVSFEYDDNLLSKEFYSFIQSYNKLFEYLAKQPADFIPILKPFNNYKEIEKEYNNCLNFFQPLIDNILKNISDDDDDGNEPKCFLEYFISEIRKDTSNLIKITDLPYICFDIIVAGIVTTSTTMDWMLLYLTNYPNIQEKLFFEINTPNHPLHKDKLQFPYLNSIIKETLRISPPAPFALPHICTDDIVIDDIFIPKNTQVIPNIYGCNRSNIESSESNVFNPDHFLSKDELNIGQCAFSFGSRQCPGANVADSIMFLVSTKLYKTFKFERTTTQLNDENGHFTRSLSPFEFKSKLIIRK.

Residues 1–21 (MILGIILGLFIYIYLINIKFF) form a helical membrane-spanning segment. Cys440 lines the heme pocket.

The protein belongs to the cytochrome P450 family. It depends on heme as a cofactor.

It localises to the membrane. In Dictyostelium discoideum (Social amoeba), this protein is Probable cytochrome P450 515A1 (cyp515A1).